Reading from the N-terminus, the 231-residue chain is MSAKGGKKIQNARSSFDKNIAYDLAEAVEIVKRTSYAKFDASVDLVFKLNLDVRKADQQLRGSVLLPNGTGKSISVLVVTNNVEKQKLATAAGADQVVDGQTLEQKIKEDIFDFDVMVADPAMMPLLGKYGKKLGPKGLMPNPKTGTVTPTPEKAVEELKKGKANYRTDKAGVVHTLVGKVSMDTEKLVENIKTVISLIKRLKPSAVKGTYIQNIVLSATMGPGVKVKIEK.

The protein belongs to the universal ribosomal protein uL1 family. As to quaternary structure, part of the 50S ribosomal subunit.

Binds directly to 23S rRNA. The L1 stalk is quite mobile in the ribosome, and is involved in E site tRNA release. In terms of biological role, protein L1 is also a translational repressor protein, it controls the translation of the L11 operon by binding to its mRNA. The protein is Large ribosomal subunit protein uL1 of Mycoplasmopsis agalactiae (strain NCTC 10123 / CIP 59.7 / PG2) (Mycoplasma agalactiae).